A 121-amino-acid polypeptide reads, in one-letter code: ATP synthase epsilon chain (121 aa).

The protein belongs to the ATPase epsilon chain family. As to quaternary structure, F-type ATPases have 2 components, CF(1) - the catalytic core - and CF(0) - the membrane proton channel. CF(1) has five subunits: alpha(3), beta(3), gamma(1), delta(1), epsilon(1). CF(0) has three main subunits: a, b and c.

The protein resides in the cell membrane. Produces ATP from ADP in the presence of a proton gradient across the membrane. This chain is ATP synthase epsilon chain, found in Mycobacterium avium (strain 104).